A 1493-amino-acid polypeptide reads, in one-letter code: Protein RNA-directed DNA methylation 3 (1493 aa).

2 disordered regions span residues 1–34 (MDRK…EGLR) and 54–96 (GYYG…SSFV). The Nuclear localization signal motif lies at 21–28 (KRKNSVEF). Basic and acidic residues predominate over residues 24–34 (NSVEFRDEGLR). The segment covering 60 to 80 (SDEDDDGLGFLNDMEDEPEVE) has biased composition (acidic residues). The span at 81-92 (ESSKAGKGEKGK) shows a compositional bias: basic and acidic residues. The KOW 1 domain occupies 239-266 (KVSEGTWARVKNGKYKGDLAQIVAVSDT). Residues 393-432 (PTCREGGKGEGSGGGKGEGSGGGKGEGSRGGKGEGSSDFK) are disordered. Over residues 401 to 417 (GEGSGGGKGEGSGGGKG) the composition is skewed to gly residues. Residues 418-432 (EGSRGGKGEGSSDFK) are compositionally biased toward basic and acidic residues. One can recognise a KOW 2 domain in the interval 501–528 (QISVNDVVKISKGPSEGKQGVVRQVYRG). Positions 578-602 (SSPKSPLSPEKEWQPRERYNSSNQG) are disordered. The segment covering 586 to 596 (PEKEWQPRERY) has biased composition (basic and acidic residues). One can recognise a KOW 3 domain in the interval 607-634 (TYSIGQKLRIRVGPLKGYLCRVIALRYS). 3 disordered regions span residues 692-711 (IGAG…PSTD), 728-747 (EKNP…TVAD), and 757-1493 (AAEN…KTGW). Copy 1 of the repeat occupies 732–741 (WGGSKPTSDV). Positions 732-1493 (WGGSKPTSDV…WGTGDKKTGW (762 aa)) are 42 X 9 AA approximate WG/GW-rich tandem repeats. Over residues 757-767 (AAENKPASASD) the composition is skewed to low complexity. A run of 37 repeats spans residues 775–784 (WGKTPASEAG), 789–797 (WGDTSASNV), 818–827 (WGTHGGSSGG), 836–845 (WGKLCEASES), 854–863 (WGKKGGSDGE), 866–875 (WGNKDGNSSA), 883–892 (WGQQDKGSDE), 917–926 (GWNKSAEDSN), 935–943 (WGQPNDGSS), 944–953 (WGKKGDGAAS), 954–962 (WGKKDDGGS), 963–972 (WGKKDDGNKD), 978–987 (WGKKDDGQKD), 1003–1012 (WGKKDDGGSS), 1013–1022 (WGKKDDGGSL), 1023–1032 (WGKKDDGGSS), 1033–1042 (WGKEDDGGSL), 1043–1052 (WGKKDDGESS), 1053–1062 (WGKKDDGESS), 1063–1072 (WGKKDDGGSS), 1073–1082 (WGKKDEGGYS), 1132–1141 (WGKQDGDGGG), 1144–1153 (WGKENDAGGG), 1156–1165 (WGKQDNGVGS), 1167–1176 (WGKQNDGSGG), 1180–1189 (WGKQNDAGGG), 1192–1201 (WGKQDSGGDG), 1204–1213 (WGKQDGGGDS), 1217–1226 (WGKQNNTSGG), 1229–1238 (WGKQSDAGGG), 1241–1250 (WGKQDGGGGG), 1253–1262 (WGKQDGGGGS), 1266–1275 (WGKQNETSNG), 1278–1287 (WGKQNDSGGG), 1290–1299 (WGKQDGGGGG), 1302–1311 (WGKQNDGGGG), and 1314–1323 (WGKQGDGGSK). A compositionally biased stretch (polar residues) spans 790–812 (GDTSASNVEASSWEKQGASTSNV). A compositionally biased stretch (basic and acidic residues) spans 846-860 (SQKKEESSWGKKGGS). Residues 866-875 (WGNKDGNSSA) show a composition bias toward polar residues. Positions 955–1090 (GKKDDGGSWG…YSEQTFDRGG (136 aa)) are enriched in basic and acidic residues. Positions 1122 to 1134 (PWSKPSGGSSWGK) are enriched in low complexity. A compositionally biased stretch (polar residues) spans 1156–1172 (WGKQDNGVGSSWGKQND). A compositionally biased stretch (gly residues) spans 1186 to 1213 (AGGGSSWGKQDSGGDGSSWGKQDGGGDS). The span at 1218 to 1231 (GKQNNTSGGSSWGK) shows a compositional bias: polar residues. Positions 1235 to 1264 (AGGGSSWGKQDGGGGGSSWGKQDGGGGSGS) are enriched in gly residues. A compositionally biased stretch (polar residues) spans 1270 to 1283 (NETSNGSSWGKQND). Residues 1284 to 1321 (SGGGSSWGKQDGGGGGSSWGKQNDGGGGSSWGKQGDGG) are compositionally biased toward gly residues. Composition is skewed to polar residues over residues 1366 to 1382 (WKTD…QSGG) and 1392 to 1401 (DSNNSKPSGS). Repeat 39 spans residues 1389-1398 (WGEDSNNSKP). The segment covering 1416–1430 (NSKKETNDKPGDDSK) has biased composition (basic and acidic residues). A compositionally biased stretch (polar residues) spans 1432 to 1442 (AWGTSNDQVNT). A run of 3 repeats spans residues 1433-1442 (WGTSNDQVNT), 1467-1475 (WGGKTNAVA), and 1484-1493 (WGTGDKKTGW).

As to quaternary structure, interacts with AGO4 via its C-terminal region and with RNA transcripts. Binds chromatin at loci subject to transcriptional silencing downstream of RNA Polymerase V, but independently from the presence of 24-nt siRNA.

It is found in the nucleus. It localises to the nucleoplasm. In terms of biological role, effector of RNA-directed DNA methylation (RdDM) triggered by small interfering RNAs (siRNAs, 24-nt RNAs). Functions as an adapter protein that binds scaffold transcripts generated by polymerase V and recruits AGO4 and AGO4-bound siRNAs to form an RdDM effector complex. Promotes the expression of 24-nt RNAs. Required for the initial establishment of DNA methylation. Together with AGO4, required for transcriptional gene silencing (TGS) by DNA methylation and repressive histone modifications (H3K9me2) of several chromatin loci. This is Protein RNA-directed DNA methylation 3 from Arabidopsis thaliana (Mouse-ear cress).